We begin with the raw amino-acid sequence, 425 residues long: L-cysteine:1D-myo-inositol 2-amino-2-deoxy-alpha-D-glucopyranoside ligase (425 aa).

Cys-43 is a binding site for Zn(2+). L-cysteinyl-5'-AMP-binding positions include 43–46 (CGIT), Ser-58, and 81–83 (NVT). A 'HIGH' region motif is present at residues 45 to 55 (ITPYDATHMGH). The 'ERGGDP' region motif lies at 199-204 (ERGGDP). An L-cysteinyl-5'-AMP-binding site is contributed by Trp-240. Cys-244 serves as a coordination point for Zn(2+). 262 to 264 (GSD) serves as a coordination point for L-cysteinyl-5'-AMP. His-269 is a Zn(2+) binding site. Val-295 is an L-cysteinyl-5'-AMP binding site. Positions 301–305 (KMSKS) match the 'KMSKS' region motif.

Belongs to the class-I aminoacyl-tRNA synthetase family. MshC subfamily. In terms of assembly, monomer. Zn(2+) is required as a cofactor.

The catalysed reaction is 1D-myo-inositol 2-amino-2-deoxy-alpha-D-glucopyranoside + L-cysteine + ATP = 1D-myo-inositol 2-(L-cysteinylamino)-2-deoxy-alpha-D-glucopyranoside + AMP + diphosphate + H(+). Catalyzes the ATP-dependent condensation of GlcN-Ins and L-cysteine to form L-Cys-GlcN-Ins. The sequence is that of L-cysteine:1D-myo-inositol 2-amino-2-deoxy-alpha-D-glucopyranoside ligase from Paenarthrobacter aurescens (strain TC1).